We begin with the raw amino-acid sequence, 953 residues long: Vacuolar membrane protease (953 aa).

At M1–P16 the chain is on the cytoplasmic side. A helical transmembrane segment spans residues W17 to I37. Residues H38–L382 lie on the Vacuolar side of the membrane. N-linked (GlcNAc...) asparagine glycosylation is found at N53 and N115. H165 and D177 together coordinate Zn(2+). E211 serves as the catalytic Proton acceptor. Zn(2+)-binding residues include E212, E237, and H310. The helical transmembrane segment at F383–I403 threads the bilayer. Residues L404–Y437 are Cytoplasmic-facing. The chain crosses the membrane as a helical span at residues P438–F458. Over N459–H464 the chain is Vacuolar. A helical transmembrane segment spans residues S465 to V485. The Cytoplasmic segment spans residues S486 to R499. Residues V500–Y520 traverse the membrane as a helical segment. At Q521–W524 the chain is on the vacuolar side. Residues A525–I545 form a helical membrane-spanning segment. The Cytoplasmic portion of the chain corresponds to S546–Q650. The segment at A570–G599 is disordered. Positions E581–P591 are enriched in acidic residues. Residues F651 to G671 form a helical membrane-spanning segment. Over S672–L684 the chain is Vacuolar. A helical transmembrane segment spans residues F685–V705. The Cytoplasmic segment spans residues H706–H711. A helical transmembrane segment spans residues I712–P732. At F733–A953 the chain is on the vacuolar side. N779 carries an N-linked (GlcNAc...) asparagine glycan.

The protein belongs to the peptidase M28 family. Zn(2+) serves as cofactor.

It is found in the vacuole membrane. Functionally, may be involved in vacuolar sorting and osmoregulation. The polypeptide is Vacuolar membrane protease (Emericella nidulans (strain FGSC A4 / ATCC 38163 / CBS 112.46 / NRRL 194 / M139) (Aspergillus nidulans)).